The following is a 396-amino-acid chain: Obg-like ATPase 1 (396 aa).

In terms of domain architecture, OBG-type G spans 23–283 (LKIGIVGLPN…LSAEERQKYL (261 aa)). Residue 32 to 37 (NVGKST) coordinates ATP. Mg(2+) contacts are provided by Ser-36 and Thr-56. ATP is bound at residue Leu-231. The Nuclear export signal signature appears at 267-274 (LELKLQEL). Lys-294 bears the N6-acetyllysine mark. The 84-residue stretch at 304–387 (QLEYFFTAGP…EDGDIIFFKF (84 aa)) folds into the TGS domain.

The protein belongs to the TRAFAC class OBG-HflX-like GTPase superfamily. OBG GTPase family. YchF/OLA1 subfamily. Monomer. The cofactor is Mg(2+). In terms of tissue distribution, expressed in all tissues tested but its expression is more abundant in testis, liver, lung, and brain. Overexpressed in several malignancies, including cancers of the colon, rectum, ovary, lung, stomach, and uterus.

It localises to the cytoplasm. It is found in the nucleus. The protein localises to the nucleolus. Its function is as follows. Hydrolyzes ATP, and can also hydrolyze GTP with lower efficiency. Has lower affinity for GTP. The sequence is that of Obg-like ATPase 1 from Homo sapiens (Human).